The chain runs to 402 residues: Calcium-responsive transactivator (402 aa).

The interval 1-148 (MSVAFASARP…TLPTTSMSLS (148 aa)) is N-terminal auto-inhibitory domain; necessary for interaction with SMARCA4/BRG1. The SH2-binding signature appears at 50–53 (YQQI). Disordered regions lie at residues 72–171 (QSLL…VPMQ) and 221–402 (AMMG…NYQQ). Positions 85–106 (LGPGALSQSGSSQGLHPQGSLS) are enriched in low complexity. Composition is skewed to polar residues over residues 128-149 (NHVS…SLSG) and 161-171 (SGPTSQSVPMQ). Residues 149–238 (GSGHGTGPGY…GGSMMGQRPM (90 aa)) are methionine-rich intra-molecular domain. Over residues 233–251 (MGQRPMAPYRPSQQGSSQQ) the composition is skewed to low complexity. Residues 252–323 (YLGQEEYYSE…SQYSQQQAGY (72 aa)) form an MFD domain region. The segment covering 261–277 (EQYSHSQGSAEPMSQQY) has biased composition (polar residues). Residues 296–305 (SYDRSFEDPT) are compositionally biased toward basic and acidic residues. The span at 311 to 375 (GGNSQYSQQQ…QGQGQQYGSY (65 aa)) shows a compositional bias: low complexity. The tract at residues 340-402 (NQQSYPGQQQ…EQGQYGNYQQ (63 aa)) is necessary for nuclear localization. The short motif at 359–362 (SQYS) is the SH2-binding element. Over residues 376-388 (RTSQTGPSAQQQR) the composition is skewed to polar residues. Residues 377 to 385 (TSQTGPSAQ) carry the SH3-binding motif. Residues 390-402 (YGYEQGQYGNYQQ) are compositionally biased toward low complexity. Positions 393–402 (EQGQYGNYQQ) are necessary for interaction with CREBBP and for the recruitment of CREBBP to the nuclear bodies. An SH2-binding motif is present at residues 397 to 400 (YGNY).

This sequence belongs to the SS18 family. As to quaternary structure, homodimer. Dimerization may be necessary for its function in neuronal dendritic development. Interacts (via C-terminus) with CREBBP (via N-terminus), EP300 and SMARCA4/BRG1. Interacts with the nBAF complex. Association with CREBBP facilitates transcription while the association with SMARCA4/BRG1 suppresses CREST-mediated transcription in resting neurons.

It is found in the nucleus. It localises to the chromosome. The protein localises to the centromere. Its subcellular location is the kinetochore. Functionally, transcriptional activator which is required for calcium-dependent dendritic growth and branching in cortical neurons. Recruits CREB-binding protein (CREBBP) to nuclear bodies. Component of the CREST-BRG1 complex, a multiprotein complex that regulates promoter activation by orchestrating a calcium-dependent release of a repressor complex and a recruitment of an activator complex. In resting neurons, transcription of the c-FOS promoter is inhibited by BRG1-dependent recruitment of a phospho-RB1-HDAC1 repressor complex. Upon calcium influx, RB1 is dephosphorylated by calcineurin, which leads to release of the repressor complex. At the same time, there is increased recruitment of CREBBP to the promoter by a CREST-dependent mechanism, which leads to transcriptional activation. The CREST-BRG1 complex also binds to the NR2B promoter, and activity-dependent induction of NR2B expression involves a release of HDAC1 and recruitment of CREBBP. The chain is Calcium-responsive transactivator (Ss18l1) from Mus musculus (Mouse).